The chain runs to 291 residues: Elongation factor Ts (291 aa).

Residues 81 to 84 (TDFV) are involved in Mg(2+) ion dislocation from EF-Tu. The segment at 271–291 (EGKEKKDESFADEVMAQVRDS) is disordered.

Belongs to the EF-Ts family.

Its subcellular location is the cytoplasm. Associates with the EF-Tu.GDP complex and induces the exchange of GDP to GTP. It remains bound to the aminoacyl-tRNA.EF-Tu.GTP complex up to the GTP hydrolysis stage on the ribosome. The protein is Elongation factor Ts of Halorhodospira halophila (strain DSM 244 / SL1) (Ectothiorhodospira halophila (strain DSM 244 / SL1)).